We begin with the raw amino-acid sequence, 81 residues long: CLAVATA3/ESR (CLE)-related protein 25 (81 aa).

Residues 1–30 (MGGNGIRALVGVIASLGLIVFLLVGILANS) form the signal peptide. Positions 57-81 (KRKVPNGPDPIHNRKAETSRRPPRV) are disordered. Residues Pro61 and Pro64 each carry the hydroxyproline modification. O-linked (Ara...) hydroxyproline glycosylation occurs at Pro64. Over residues 67-81 (IHNRKAETSRRPPRV) the composition is skewed to basic and acidic residues.

Belongs to the CLV3/ESR signal peptide family. In terms of processing, the O-glycosylation (arabinosylation) of the hydroxyproline Pro-64 enhances binding affinity of the CLE25p peptide for its receptor. Mostly expressed in flowers and siliques, and, to a lower extent, in roots, stems, apex, seedlings, leaves and pollen.

It is found in the secreted. The protein resides in the extracellular space. Functionally, extracellular signal peptide that regulates cell fate. Represses root apical meristem maintenance. Regulates the transition of protophloem cells from proliferation to differentiation, thus impinging on postembryonic growth capacity of the root meristem; this signaling pathway requires CRN and CLV2. The polypeptide is CLAVATA3/ESR (CLE)-related protein 25 (Arabidopsis thaliana (Mouse-ear cress)).